The sequence spans 290 residues: Putative tyrosine recombinase TTE1313 (290 aa).

Residues 1–85 (MAESVVGEFL…SIKAFYHYLF (85 aa)) form the Core-binding (CB) domain. The Tyr recombinase domain maps to 106–290 (KEPVTLTVEQ…EVYNKFHPRA (185 aa)). Arg-239 is an active-site residue. The active-site O-(3'-phospho-DNA)-tyrosine intermediate is the Tyr-283.

The protein belongs to the 'phage' integrase family.

The protein resides in the cytoplasm. Its function is as follows. Site-specific tyrosine recombinase, which acts by catalyzing the cutting and rejoining of the recombining DNA molecules. This is Putative tyrosine recombinase TTE1313 from Caldanaerobacter subterraneus subsp. tengcongensis (strain DSM 15242 / JCM 11007 / NBRC 100824 / MB4) (Thermoanaerobacter tengcongensis).